Reading from the N-terminus, the 1399-residue chain is MKDLLNLLKNQGQVEEFDAIRIGLASPEMIRSWSFGEVKKPETINYRTFKPERDGLFCAKIFGPVKDYECLCGKYKRLKHRGVICEKCGVEVALAKVRRERMAHIELASPVAHIWFLKSLPSRIGLLMDMTLRDIERVLYFESYVVIDPGMTTLEKGQLLNDEQYFEALEEFGDDFDARMGAEAVRELLHAIDLEHEIGRLREEIPQTNSETKIKKLSKRLKLMEAFQGSGNLPEWMVLTVLPVLPPDLRPLVPLDGGRFATSDLNDLYRRVINRNNRLKRLLDLSAPDIIVRNEKRMLQEAVDALLDNGRRGRAITGSNKRPLKSLADMIKGKQGRFRQNLLGKRVDYSGRSVITVGPTLRLHQCGLPKKMALELFKPFIFGKLEMRGLATTIKAAKKMVERELPEVWDVLAEVIREHPVLLNRAPTLHRLGIQAFEPVLIEGKAIQLHPLVCAAYNADFDGDQMAVHVPLTLEAQLEARALMMSTNNILSPANGEPIIVPSQDVVLGLYYMTREAINAKGEGRVFADLQEVDRVFRAGEAALHAKIKVRINETVKERDGSVVKNTRIVDTTVGRALLFQVVPAGLPYDVVNQPMKKKAISKLINQCYRVVGLKETVIFADQLMYTGFAYSTISGVSIGVNDFVIPDEKARIIGNATDEVKEIESQYASGLVTQGEKYNKVIDLWSKANDEVSKAMMANLSKEKVIDREGKEVEQESFNSMYMMADSGARGSAAQIRQLAGMRGLMAKPDGSIIETPITANFREGLSVLQYFISTHGARKGLADTALKTANSGYLTRRLVDVAQDLVVTEIDCGTDQGLVMTPHIEGGDVVEPLGERVLGRVIARDVFKPGTEDVIVPAGTLVDEQWVEFIELNSIDEVIVRSPINCETRYGICAKCYGRDLARGHQVNIGEAVGVIAAQSIGEPGTQLTMRTFHIGGAASRTSAADSVQVKNGGMVRLHNLKQVERADGNLVAVSRSGELAIADEFGRERERYKLPYGAVISVKEGEKVEAGAIVAKWDPHTHPIVTELKGTVTFVGMEENITIKRQTDELTGLTNIEVLDVKDRPAAGKEIRPAIKMVDAAGKDLYLPGTDVPAQYFLPANALVGVADGAQIGVGDVIARIPQETSKTRDITGGLPRVADLFEARRPKEASILAEVSGTIAFGKETKGKRRLVITPTDGSEPYEELIPKWRHLNVFEGEQVNRGEVISDGPSDPHDILRLLGVSALAKYIVNEIQDVYRLQGVKINDKHIETILRQMLRKVEISESGDSSFIKGDQMELTQVLVENERLASEDKFISKFTRVLLGITKASLSTESFISAASFQETTRVLTEAAVTGKRDYLRGLKENVVVGRLIPAGTGLAYHSERKRRRDADKPLRVSASEVEAALTEALNSSGN.

4 residues coordinate Zn(2+): cysteine 70, cysteine 72, cysteine 85, and cysteine 88. Mg(2+) contacts are provided by aspartate 460, aspartate 462, and aspartate 464. 4 residues coordinate Zn(2+): cysteine 814, cysteine 888, cysteine 895, and cysteine 898.

It belongs to the RNA polymerase beta' chain family. As to quaternary structure, the RNAP catalytic core consists of 2 alpha, 1 beta, 1 beta' and 1 omega subunit. When a sigma factor is associated with the core the holoenzyme is formed, which can initiate transcription. The cofactor is Mg(2+). Requires Zn(2+) as cofactor.

The catalysed reaction is RNA(n) + a ribonucleoside 5'-triphosphate = RNA(n+1) + diphosphate. Its function is as follows. DNA-dependent RNA polymerase catalyzes the transcription of DNA into RNA using the four ribonucleoside triphosphates as substrates. In Pseudomonas putida (strain ATCC 47054 / DSM 6125 / CFBP 8728 / NCIMB 11950 / KT2440), this protein is DNA-directed RNA polymerase subunit beta'.